A 158-amino-acid chain; its full sequence is S-ribosylhomocysteine lyase (158 aa).

The Fe cation site is built by histidine 54, histidine 58, and cysteine 125.

It belongs to the LuxS family. In terms of assembly, homodimer. The cofactor is Fe cation.

The enzyme catalyses S-(5-deoxy-D-ribos-5-yl)-L-homocysteine = (S)-4,5-dihydroxypentane-2,3-dione + L-homocysteine. Involved in the synthesis of autoinducer 2 (AI-2) which is secreted by bacteria and is used to communicate both the cell density and the metabolic potential of the environment. The regulation of gene expression in response to changes in cell density is called quorum sensing. Catalyzes the transformation of S-ribosylhomocysteine (RHC) to homocysteine (HC) and 4,5-dihydroxy-2,3-pentadione (DPD). The chain is S-ribosylhomocysteine lyase from Lactococcus lactis subsp. cremoris (strain MG1363).